The primary structure comprises 139 residues: Lymphocyte antigen 6H (139 aa).

Positions 1-25 (MLPAAMKSLGLALLALLLCPSPAHG) are cleaved as a signal peptide. The 88-residue stretch at 26-113 (LWCQDCTLAN…CEKDLCNGAS (88 aa)) folds into the UPAR/Ly6 domain. Cystine bridges form between Cys28–Cys51, Cys31–Cys39, Cys44–Cys72, Cys76–Cys103, and Cys104–Cys109. Residue Asn35 is glycosylated (N-linked (GlcNAc...) asparagine). Residue Asn110 is the site of GPI-anchor amidated asparagine attachment. The propeptide at 111-139 (GASVAGRSPWALAGGLLLSLGPALLWAGP) is removed in mature form.

Interacts with CHRNA4 and CHRNA7. As to expression, strongly expressed in brain, also found in lower levels in eye and reproductive tissues.

It localises to the cell membrane. In terms of biological role, believed to act as modulator of nicotinic acetylcholine receptors (nAChRs) activity. In vitro inhibits alpha-3:beta-4-containing nAChRs maximum response. In vitro inhibits alpha-3:beta-4-containing nAChRs maximum response. May play a role in the intracellular trafficking of alpha-7-containing nAChRs and may inhibit their expression at the cell surface. Seems to inhibit alpha-7/CHRNA7 signaling in hippocampal neurons. This is Lymphocyte antigen 6H (Ly6h) from Mus musculus (Mouse).